The primary structure comprises 1390 residues: DNA-directed RNA polymerase subunit beta' (1390 aa).

4 residues coordinate Zn(2+): Cys-73, Cys-75, Cys-88, and Cys-91. Mg(2+) is bound by residues Asp-464, Asp-466, and Asp-468. Zn(2+) is bound by residues Cys-810, Cys-884, Cys-891, and Cys-894. Positions 1365–1390 are disordered; sequence EKKEQKIYGNGEEPAKEQKWIPQAGT.

It belongs to the RNA polymerase beta' chain family. In terms of assembly, the RNAP catalytic core consists of 2 alpha, 1 beta, 1 beta' and 1 omega subunit. When a sigma factor is associated with the core the holoenzyme is formed, which can initiate transcription. It depends on Mg(2+) as a cofactor. Requires Zn(2+) as cofactor.

It carries out the reaction RNA(n) + a ribonucleoside 5'-triphosphate = RNA(n+1) + diphosphate. DNA-dependent RNA polymerase catalyzes the transcription of DNA into RNA using the four ribonucleoside triphosphates as substrates. This Methylacidiphilum infernorum (isolate V4) (Methylokorus infernorum (strain V4)) protein is DNA-directed RNA polymerase subunit beta'.